Consider the following 139-residue polypeptide: Histone H3-like 5 (139 aa).

Polar residues predominate over residues 1–10; sequence MARTKQTARI. Positions 1 to 43 are disordered; sequence MARTKQTARISTGGKAPRKQLAPKAARQSAPATGGVKKPHRFR. Lys5 carries the N6,N6,N6-trimethyllysine; alternate modification. Residue Lys5 is modified to N6,N6-dimethyllysine; alternate. Residue Lys5 is modified to N6-methyllysine; alternate. Phosphoserine is present on Ser11. A Phosphothreonine modification is found at Thr12. At Lys15 the chain carries N6-acetyllysine. An N6-methyllysine; alternate mark is found at Lys19 and Lys24. N6-acetyllysine; alternate occurs at positions 19 and 24. Ser29 bears the Phosphoserine mark. An N6,N6,N6-trimethyllysine; alternate modification is found at Lys37. Lys37 is modified (N6,N6-dimethyllysine; alternate). Lys37 is modified (N6-methyllysine; alternate).

It belongs to the histone H3 family. In terms of assembly, the nucleosome is a histone octamer containing two molecules each of H2A, H2B, H3 and H4 assembled in one H3-H4 heterotetramer and two H2A-H2B heterodimers. The octamer wraps approximately 147 bp of DNA.

The protein resides in the nucleus. The protein localises to the chromosome. In terms of biological role, core component of nucleosome. Nucleosomes wrap and compact DNA into chromatin, limiting DNA accessibility to the cellular machineries which require DNA as a template. Histones thereby play a central role in transcription regulation, DNA repair, DNA replication and chromosomal stability. DNA accessibility is regulated via a complex set of post-translational modifications of histones, also called histone code, and nucleosome remodeling. In Arabidopsis thaliana (Mouse-ear cress), this protein is Histone H3-like 5.